We begin with the raw amino-acid sequence, 278 residues long: 4-deoxy-L-threo-5-hexosulose-uronate ketol-isomerase (278 aa).

The Zn(2+) site is built by His196, His198, Glu203, and His245.

The protein belongs to the KduI family. Zn(2+) serves as cofactor.

The catalysed reaction is 5-dehydro-4-deoxy-D-glucuronate = 3-deoxy-D-glycero-2,5-hexodiulosonate. The protein operates within glycan metabolism; pectin degradation; 2-dehydro-3-deoxy-D-gluconate from pectin: step 4/5. In terms of biological role, catalyzes the isomerization of 5-dehydro-4-deoxy-D-glucuronate to 3-deoxy-D-glycero-2,5-hexodiulosonate. In Enterobacter sp. (strain 638), this protein is 4-deoxy-L-threo-5-hexosulose-uronate ketol-isomerase.